Here is a 108-residue protein sequence, read N- to C-terminus: Peptidyl-prolyl cis-trans isomerase FKBP1A (108 aa).

The PPIase FKBP-type domain occupies 20-108 (GQTCVVHYTG…VFDVELLKLE (89 aa)). Lysine 53 bears the N6-acetyllysine; alternate mark. N6-succinyllysine; alternate is present on lysine 53.

This sequence belongs to the FKBP-type PPIase family. FKBP1 subfamily. As to quaternary structure, interacts with TGFBR1; prevents TGFBR1 phosphorylation by TGFBR2 and stabilizes it in the inactive conformation. Interacts with ACVR1B and SMAD7. Identified in a complex composed of RYR1, PDE4D, PKA, FKBP1A and protein phosphatase 1 (PP1). Interacts directly with RYR2 and RYR3. Interacts directly with RYR1. Interacts with GLMN; rapamycin and FK506 abolish the interaction with GLMN in a dose dependent manner.

It is found in the cytoplasm. The protein localises to the cytosol. The protein resides in the sarcoplasmic reticulum membrane. The enzyme catalyses [protein]-peptidylproline (omega=180) = [protein]-peptidylproline (omega=0). Inhibited by both FK506 and rapamycin. Keeps in an inactive conformation TGFBR1, the TGF-beta type I serine/threonine kinase receptor, preventing TGF-beta receptor activation in absence of ligand. Recruits SMAD7 to ACVR1B which prevents the association of SMAD2 and SMAD3 with the activin receptor complex, thereby blocking the activin signal. May modulate the RYR1 calcium channel activity. PPIases accelerate the folding of proteins. It catalyzes the cis-trans isomerization of proline imidic peptide bonds in oligopeptides. The protein is Peptidyl-prolyl cis-trans isomerase FKBP1A (Fkbp1a) of Mus musculus (Mouse).